Consider the following 918-residue polypeptide: Cell cycle and apoptosis regulator protein 2 (918 aa).

The interval 1-35 (MSQFKRQRINPLPGGRNFSGTASTSLLGPPPGLLT) is disordered. Position 35 is a phosphothreonine (Thr-35). An N6-acetyllysine; by KAT8 modification is found at Lys-112. Position 123 is an N6-methyllysine (Lys-123). Position 124 is a phosphoserine (Ser-124). Disordered regions lie at residues 179-219 (NRFP…KPRH), 446-510 (KAAE…PAVI), and 568-637 (VSPP…ASED). Residue Arg-180 is modified to Omega-N-methylarginine. Residue Lys-215 is modified to N6-acetyllysine; by KAT8. Composition is skewed to low complexity over residues 447-468 (AAEAAPPTQEAPGETEPTEQAP) and 482-492 (AETPEATTQQE). Thr-454 bears the Phosphothreonine; by ATM, ATR and CK2 mark. Thr-484 carries the post-translational modification Phosphothreonine. Ser-569 is subject to Phosphoserine. Positions 572-597 (EPEKEEAAKEEEAIKEEVVKEPKDEA) are enriched in basic and acidic residues. Lys-586 is covalently cross-linked (Glycyl lysine isopeptide (Lys-Gly) (interchain with G-Cter in SUMO2 and SUMO3); alternate). Lys-586 is covalently cross-linked (Glycyl lysine isopeptide (Lys-Gly) (interchain with G-Cter in SUMO2); alternate). The segment at 605–665 (ESEAPLKEDG…EEFAGAKLED (61 aa)) is interaction with MCC. A phosphoserine mark is found at Ser-622, Ser-670, Ser-673, Ser-676, Ser-682, and Ser-803. The interaction with NR1D1 stretch occupies residues 699–918 (DCLLAFVFFD…VEKEEPAPSN (220 aa)). A coiled-coil region spans residues 824–904 (LENRIHTLEL…QLEIQRVVEK (81 aa)). Residue Thr-892 is modified to Phosphothreonine.

Component of the DBIRD complex. Interacts with ZNF326/ZIRD; the interaction is direct. Interacts (via N-terminus) with SIRT1, which inhibits the deacetylation of substrates. Interacts (via N-terminus) with SUV39H1; this interaction abolishes the interaction with SIRT1. Component of a nuclear receptor-mediated transcription complex composed of at least ZNF335, CCAR2 and EMSY; the complex stimulates the transcription of nuclear receptor target genes such as SOX9 and HOXA1. Within the complex interacts with EMSY and interacts with ZNF335 (via C-terminus). Components of this complex may associate with components of a histone methylation complex to form a complex at least composed of ZNF335, HCFC1, CCAR2, EMSY, MKI67, RBBP5, ASH2L and WDR5. Within this complex, interacts with ASH2L. Interacts with NR1D1. Interacts (via N-terminus) with ESR1 and ESR2. Interacts (via N-terminus) with HDAC3 (via C-terminus). Interacts with HDAC1 and MED2F. Interacts with MCC. Interacts (via N-terminus) with NR1H2 and NR1H3 in a ligand-independent manner. Interacts with CSNK2A1. Interacts (via N-terminus) with p53/TP53. Interacts (via N-terminus) with BRCA1 (via the BRCT domains). Interacts (via N-terminus) with CHEK2 (via protein kinase domain). Interacts with PSEM3. Interacts (via N-terminus) with PSIA3 and SENP1. The sumoylated form shows a preferential interaction with SIRT1 as compared to its unmodified form. Interacts with CECR2; may form part of the CERF-1 and/or CEF-5 ISWI chromatin remodeling complexes in embryonic stem cells. In terms of processing, ATM/ATR-mediated phosphorylation at Thr-454 upon DNA damage promotes binding to SIRT1. Phosphorylation at Thr-454 promotes its sumoylation by switching the binding partner of CCAR2 from SENP1 to PIAS3. Acetylation at Lys-112 and Lys-215 by KAT8 prevents inhibitory binding to SIRT1 and increases its deacetylase activity. Post-translationally, genotoxic stress induces its sumoylation and sumoylation promotes the SIRT1-CCAR2 interaction which in turn inhibits SIRT1-mediated deacetylation of p53/TP53. Sumoylation leads to transcriptional activation of p53/TP53 by sequestering SIRT1 from p53/TP53. Desumoylated by SENP1.

The protein localises to the nucleus. It is found in the cytoplasm. Its subcellular location is the cytoskeleton. It localises to the spindle. Functionally, core component of the DBIRD complex, a multiprotein complex that acts at the interface between core mRNP particles and RNA polymerase II (RNAPII) and integrates transcript elongation with the regulation of alternative splicing: the DBIRD complex affects local transcript elongation rates and alternative splicing of a large set of exons embedded in (A + T)-rich DNA regions. Inhibits SIRT1 deacetylase activity leading to increasing levels of p53/TP53 acetylation and p53-mediated apoptosis. Inhibits SUV39H1 methyltransferase activity. Mediates ligand-dependent transcriptional activation by nuclear hormone receptors. Plays a critical role in maintaining genomic stability and cellular integrity following UV-induced genotoxic stress. Regulates the circadian expression of the core clock components NR1D1 and BMAL1. Enhances the transcriptional repressor activity of NR1D1 through stabilization of NR1D1 protein levels by preventing its ubiquitination and subsequent degradation. Represses the ligand-dependent transcriptional activation function of ESR2. Acts as a regulator of PCK1 expression and gluconeogenesis by a mechanism that involves, at least in part, both NR1D1 and SIRT1. Negatively regulates the deacetylase activity of HDAC3 and can alter its subcellular localization. Positively regulates the beta-catenin pathway (canonical Wnt signaling pathway) and is required for MCC-mediated repression of the beta-catenin pathway. Represses ligand-dependent transcriptional activation function of NR1H2 and NR1H3 and inhibits the interaction of SIRT1 with NR1H3. Plays an important role in tumor suppression through p53/TP53 regulation; stabilizes p53/TP53 by affecting its interaction with ubiquitin ligase MDM2. Represses the transcriptional activator activity of BRCA1. Inhibits SIRT1 in a CHEK2 and PSEM3-dependent manner and inhibits the activity of CHEK2 in vitro. In Pongo abelii (Sumatran orangutan), this protein is Cell cycle and apoptosis regulator protein 2 (CCAR2).